The primary structure comprises 256 residues: Trans-aconitate 2-methyltransferase (256 aa).

The protein belongs to the methyltransferase superfamily. Tam family.

The protein resides in the cytoplasm. It catalyses the reaction trans-aconitate + S-adenosyl-L-methionine = (E)-3-(methoxycarbonyl)pent-2-enedioate + S-adenosyl-L-homocysteine. Functionally, catalyzes the S-adenosylmethionine monomethyl esterification of trans-aconitate. This chain is Trans-aconitate 2-methyltransferase, found in Rhizobium leguminosarum bv. trifolii (strain WSM2304).